The sequence spans 234 residues: tRNA (guanine-N(1)-)-methyltransferase (234 aa).

S-adenosyl-L-methionine-binding positions include Gly-115 and 135–140 (VGDYIL).

The protein belongs to the RNA methyltransferase TrmD family. In terms of assembly, homodimer.

Its subcellular location is the cytoplasm. It catalyses the reaction guanosine(37) in tRNA + S-adenosyl-L-methionine = N(1)-methylguanosine(37) in tRNA + S-adenosyl-L-homocysteine + H(+). In terms of biological role, specifically methylates guanosine-37 in various tRNAs. The sequence is that of tRNA (guanine-N(1)-)-methyltransferase from Rickettsia africae (strain ESF-5).